We begin with the raw amino-acid sequence, 267 residues long: Chlorophyll a-b binding protein 3A, chloroplastic (267 aa).

The transit peptide at 1-34 (MAASTMALSSSTFAGKTVKLAPSSSEITGNGRIT) directs the protein to the chloroplast. The helical transmembrane segment at 153–173 (LVHAQSILAIWACQVVLMGAV) threads the bilayer. Chlorophyll b-binding residues include Val154, Ser158, Gln166, Glu174, Arg177, and Leu183. Chlorophyll a contacts are provided by Lys214, Glu215, Asn218, Arg220, Gln232, His247, and Ala256. Residues 221-241 (LAMFSMFGFFVQAIVTGKGPL) traverse the membrane as a helical segment. Phe263 contacts chlorophyll b.

This sequence belongs to the light-harvesting chlorophyll a/b-binding (LHC) protein family. As to quaternary structure, the LHC complex consists of chlorophyll a-b binding proteins. Binds at least 14 chlorophylls (8 Chl-a and 6 Chl-b) and carotenoids such as lutein and neoxanthin. serves as cofactor. In terms of processing, photoregulated by reversible phosphorylation of its threonine residues.

It localises to the plastid. The protein localises to the chloroplast thylakoid membrane. The light-harvesting complex (LHC) functions as a light receptor, it captures and delivers excitation energy to photosystems with which it is closely associated. The polypeptide is Chlorophyll a-b binding protein 3A, chloroplastic (CAB3A) (Solanum lycopersicum (Tomato)).